Here is a 613-residue protein sequence, read N- to C-terminus: Dihydroxy-acid dehydratase (613 aa).

Position 81 (aspartate 81) interacts with Mg(2+). Cysteine 122 serves as a coordination point for [2Fe-2S] cluster. Residues aspartate 123 and lysine 124 each coordinate Mg(2+). The residue at position 124 (lysine 124) is an N6-carboxylysine. Cysteine 197 serves as a coordination point for [2Fe-2S] cluster. Residue glutamate 493 participates in Mg(2+) binding. Serine 519 acts as the Proton acceptor in catalysis.

This sequence belongs to the IlvD/Edd family. Homodimer. The cofactor is [2Fe-2S] cluster. Requires Mg(2+) as cofactor.

It carries out the reaction (2R)-2,3-dihydroxy-3-methylbutanoate = 3-methyl-2-oxobutanoate + H2O. The enzyme catalyses (2R,3R)-2,3-dihydroxy-3-methylpentanoate = (S)-3-methyl-2-oxopentanoate + H2O. It participates in amino-acid biosynthesis; L-isoleucine biosynthesis; L-isoleucine from 2-oxobutanoate: step 3/4. It functions in the pathway amino-acid biosynthesis; L-valine biosynthesis; L-valine from pyruvate: step 3/4. Its function is as follows. Functions in the biosynthesis of branched-chain amino acids. Catalyzes the dehydration of (2R,3R)-2,3-dihydroxy-3-methylpentanoate (2,3-dihydroxy-3-methylvalerate) into 2-oxo-3-methylpentanoate (2-oxo-3-methylvalerate) and of (2R)-2,3-dihydroxy-3-methylbutanoate (2,3-dihydroxyisovalerate) into 2-oxo-3-methylbutanoate (2-oxoisovalerate), the penultimate precursor to L-isoleucine and L-valine, respectively. This chain is Dihydroxy-acid dehydratase, found in Corynebacterium glutamicum (strain R).